The sequence spans 1450 residues: MSKNNKLNGKDNRQSKIEKLSELKLRHDQLTNELYHLHEYISLVEYDPFYIPNSENYERLLEEKDVTWGSIFQEKKQLHNESSGKKVRRSVRHLRDSGSSTINELDTMSENDINLLKEVDILAKQKLQDLKLQFSNSHIKKKGNTKRAKIVKQVPNHQDKSESPQISERDVKTVVKDLKPNHRGSEIKPEIMESSDVKNEIENCDFNEKQLKLYKDDDIASESDFYFTTSSEDELPNKRRGTIKRRKRINLYVNPPKAVITNPDNIANSHYPTLHEYLDSFKILEDDMTNEEYNTFIKEQQRFAKMIKKGIETGALKYDPVTETVQPSARKVPNMFSHAKVDPIQYMYKEQNLHIHQEHLINQGLFSSKLVQNRKKQRIAGAKKIAQMIEQHFKHIAGAEDRRLKENEKQRKAIARNIIQSVKKRWNLAEKAYRILKKDEEEQLKRIQGKEHLSKMLEKSSKLLGAQLKQHPNEDDIENSTSDDFSSTGDSDNLSSSSDEESDDEINDLSEDQKNNINELKTSSTSAFSSPEISSPSKNPDLGLNSLLTNDFENESNSSDTNEEFIMGDSDTSHSDDENLTDDSEDSNDGEHDTTSDNEKSDLFPADTTNDPLAVQDVPTPSLLRGTLRTYQKQGLNWLASLYNNNTNGILADEMGLGKTIQTISLLSYLACEKHNWGPHLIVVPTSVLLNWEMEFKRFAPGFKVLTYYGNPQQRKEKRKGWNKPDAFHVCIVSYQLIVQDQHSFKRKKWQYMVLDEAHNIKNFRSTRWQALLNFNTQRRILLTGTPLQNNIAELWSLLYFLMPQTVIDGQKVSGFADLDAFQQWFGRPVDKLIETGGTYEQDNETKRTVEKLHQVLRPYLLRRLKADVEKQIPGKYEHIVYCKLSKRQRFLYDDFMSRAQTKATLASGNFMSIVNCLMQLRKVCNHPDLFEVRPIKTSFLFGESVIARYSERANSITRRIHFHDKDTLVDLQNINLQFTNNDLEKTSYHTNTINKLACINEFVEEVQKLRKQNAEEERQKSRHLKINTQNISNFYEEFMQQKLDEQENKINFIGYLNSQRCSRKTVYGMNLIRLLEMPHVSNNCIDDPNYDDLIKPLQTRLLDGRTTIEKFAVLTPGAVTSNIGELTLGMDEFVTPNSKSGIIPYEELVQLDNPFHQVQTKLTIAFPDKSLLQYDCGKLQKLAILLQQLKDGGHRALIFTQMTKVLDILEQFLNYHGYLYMRLDGATKIEDRQILTERFNSDPKITVFILSSRSGGLGINLTGADTVIFYDSDWNPAMDKQCQDRCHRIGQTRDVHIYRFVSEHTIESNILKKANQKRQLDDVIIQKGEFTTDYFSKLSVKDLFGSDVVGDLPVIDTKPLLGSDSEAIKDPKKLEKLLAQAEDEDDVKAANSALREVNVDDEDFDESSTNKTGGNILNGDDIDEDVDEYEGTNHVEEYMLRFIANGFYF.

In terms of domain architecture, HSA spans 344 to 417; sequence IQYMYKEQNL…EKQRKAIARN (74 aa). Residues 469-618 are disordered; the sequence is KQHPNEDDIE…TNDPLAVQDV (150 aa). Residues 480 to 497 show a composition bias toward low complexity; the sequence is STSDDFSSTGDSDNLSSS. Positions 498–510 are enriched in acidic residues; that stretch reads SDEESDDEINDLS. Composition is skewed to low complexity over residues 523 to 540 and 549 to 560; these read SSTSAFSSPEISSPSKNP and TNDFENESNSSD. Positions 578–588 are enriched in acidic residues; that stretch reads ENLTDDSEDSN. Residues 589 to 602 show a composition bias toward basic and acidic residues; it reads DGEHDTTSDNEKSD. The region spanning 640–805 is the Helicase ATP-binding domain; that stretch reads ASLYNNNTNG…WSLLYFLMPQ (166 aa). 653–700 provides a ligand contact to ATP; the sequence is DEMGLGKTIQTISLLSYLACEKHNWGPHLIVVPTSVLLNWEMEFKRFA. The DEAH box motif lies at 756–759; that stretch reads DEAH. The Helicase C-terminal domain maps to 1179-1332; that stretch reads KLQKLAILLQ…DVIIQKGEFT (154 aa). Residues 1400-1424 are disordered; the sequence is VDDEDFDESSTNKTGGNILNGDDID.

This sequence belongs to the SNF2/RAD54 helicase family. SWR1 subfamily. Component of the SWR1 chromatin-remodeling complex.

The protein resides in the nucleus. The enzyme catalyses ATP + H2O = ADP + phosphate + H(+). Functionally, catalytic component of the SWR1 complex which mediates the ATP-dependent exchange of histone H2A for the H2A variant HZT1 leading to transcriptional regulation of selected genes by chromatin remodeling. The chain is Helicase SWR1 (SWR1) from Candida glabrata (strain ATCC 2001 / BCRC 20586 / JCM 3761 / NBRC 0622 / NRRL Y-65 / CBS 138) (Yeast).